The sequence spans 119 residues: Chymotrypsin inhibitor WCI (119 aa).

Disulfide bonds link cysteine 6-cysteine 55, cysteine 20-cysteine 44, cysteine 29-cysteine 87, cysteine 45-cysteine 105, and cysteine 57-cysteine 116.

The protein localises to the secreted. In terms of biological role, inhibits bovine, insect and wheat chymotrypsins. Inhibits bovine chymotrypsin with Ki of 0.6 nM. Does not inhibit human or wheat alpha-amylases, bovine pancreatic trypsin, or trypsin-like activity isolated from wheat. The chain is Chymotrypsin inhibitor WCI from Triticum aestivum (Wheat).